A 617-amino-acid polypeptide reads, in one-letter code: Proline--tRNA ligase (617 aa).

The protein belongs to the class-II aminoacyl-tRNA synthetase family. ProS type 1 subfamily. In terms of assembly, homodimer.

The protein resides in the cytoplasm. It catalyses the reaction tRNA(Pro) + L-proline + ATP = L-prolyl-tRNA(Pro) + AMP + diphosphate. In terms of biological role, catalyzes the attachment of proline to tRNA(Pro) in a two-step reaction: proline is first activated by ATP to form Pro-AMP and then transferred to the acceptor end of tRNA(Pro). As ProRS can inadvertently accommodate and process non-cognate amino acids such as alanine and cysteine, to avoid such errors it has two additional distinct editing activities against alanine. One activity is designated as 'pretransfer' editing and involves the tRNA(Pro)-independent hydrolysis of activated Ala-AMP. The other activity is designated 'posttransfer' editing and involves deacylation of mischarged Ala-tRNA(Pro). The misacylated Cys-tRNA(Pro) is not edited by ProRS. The sequence is that of Proline--tRNA ligase from Streptococcus pneumoniae serotype 4 (strain ATCC BAA-334 / TIGR4).